A 391-amino-acid polypeptide reads, in one-letter code: GTPase Obg (391 aa).

An Obg domain is found at 1-159 (MKFIDEALIR…RDLLLELMLL (159 aa)). An OBG-type G domain is found at 160–333 (ADVGMLGLPN…LTRDIMDFIE (174 aa)). GTP-binding positions include 166 to 173 (GLPNAGKS), 191 to 195 (FTTLV), 213 to 216 (DIPG), 283 to 286 (NKID), and 314 to 316 (SAA). Mg(2+) is bound by residues serine 173 and threonine 193.

Belongs to the TRAFAC class OBG-HflX-like GTPase superfamily. OBG GTPase family. Monomer. It depends on Mg(2+) as a cofactor.

It is found in the cytoplasm. Functionally, an essential GTPase which binds GTP, GDP and possibly (p)ppGpp with moderate affinity, with high nucleotide exchange rates and a fairly low GTP hydrolysis rate. Plays a role in control of the cell cycle, stress response, ribosome biogenesis and in those bacteria that undergo differentiation, in morphogenesis control. The chain is GTPase Obg from Actinobacillus pleuropneumoniae serotype 5b (strain L20).